The primary structure comprises 132 residues: RuBisCO chaperone RbcX (132 aa).

The disordered stretch occupies residues 110–132 (HLSLSNPSPESEQQTISDTDWDH). Residues 111–132 (LSLSNPSPESEQQTISDTDWDH) are compositionally biased toward polar residues.

This sequence belongs to the RbcX family. As to quaternary structure, homodimer. Interacts with the exposed C-terminal peptide of RbcL via its central cleft, contacts a second RbcL monomer via its peripheral polar surface. RbcX and Raf1 can bind simultaneously to RbcL.

The protein localises to the carboxysome. The protein resides in the cytoplasm. An RbcL-specific chaperone. The central cleft of the RbcX homodimer (RbcX2) binds the C-terminus of an RbcL monomer, stabilizing the C-terminus and probably preventing its reassociation with chaperonin GroEL-ES. At the same time the peripheral region of RbcX2 binds a second RbcL monomer, bridging the RbcL homodimers in the correct orientation. The RbcX2(2)-bound RbcL dimers then assemble into the RbcL8 core (RbcL8-(RbcX2)8). RbcS binding triggers the release of RbcX2. Functionally, when rbcL-rbcX-rbcS or rbcL-rbcS were overexpressed in E.coli no change in reconstituted RuBisCO activity was observed, which suggests RbcX plays no role in RuBisCO assembly in this system. However in PubMed:8472962 E.coli chaperones groL and groS were also overexpressed, which may compensate for lack of rbcX. The chain is RuBisCO chaperone RbcX from Nostoc sp. (strain PCC 7120 / SAG 25.82 / UTEX 2576).